We begin with the raw amino-acid sequence, 306 residues long: Deoxyribokinase (306 aa).

Substrate contacts are provided by residues 10–12, 38–42, and Glu139; these read MVD and GKGAN. ATP-binding positions include Asn184 and 220 to 225; that span reads TMGEKG. Residues Asp246 and Ser248 each coordinate K(+). Position 251–252 (251–252) interacts with ATP; sequence GD. Residue Asp252 participates in substrate binding. The active-site Proton acceptor is the Asp252. K(+) contacts are provided by Ser282, Gly285, Gly287, and Ser291.

Belongs to the carbohydrate kinase PfkB family. Deoxyribokinase subfamily. In terms of assembly, homodimer. It depends on Mg(2+) as a cofactor.

It is found in the cytoplasm. It catalyses the reaction 2-deoxy-D-ribose + ATP = 2-deoxy-D-ribose 5-phosphate + ADP + H(+). Catalyzes the ATP-dependent phosphorylation of 2-deoxy-D-ribose to 2-deoxy-D-ribose 5-phosphate (dRib-5P), allowing the use of deoxyribose as the sole carbon source. Can also use D-ribose, with much lower efficiency. The polypeptide is Deoxyribokinase (Salmonella typhi).